The primary structure comprises 446 residues: Acyl-lipid (8-3)-desaturase (446 aa).

Residues 6–82 form the Cytochrome b5 heme-binding domain; it reads GKTFTWEELA…MKKYYVGTLV (77 aa). The heme site is built by His-41 and His-64. 2 helical membrane passes run 125–145 and 150–170; these read ALIFGSLIASYYAQLFVPFVV and LQVVFAIIMGFACAQVGLNPL. Residues 171–175 carry the Histidine box-1 motif; that stretch reads HDASH. The short motif at 207–212 is the Histidine box-2 element; that stretch reads HMLGHH. The Histidine box-3 signature appears at 387-391; it reads QAVHH.

This sequence belongs to the fatty acid desaturase type 1 family. Requires Fe(2+) as cofactor.

It is found in the membrane. It carries out the reaction an (8Z,11Z,14Z)-icosatrienoyl-containing glycerolipid + 2 Fe(II)-[cytochrome b5] + O2 + 2 H(+) = (5Z,8Z,11Z,14Z)-eicosatetraenoyl-containing glycerolipid + 2 Fe(III)-[cytochrome b5] + 2 H2O. It catalyses the reaction an (8Z,11Z,14Z,17Z)-eicosatetraenoyl-containing glycerolipid + 2 Fe(II)-[cytochrome b5] + O2 + 2 H(+) = a (5Z,8Z,11Z,14Z,17Z)-eicosapentaenoyl-containing glycerolipid + 2 Fe(III)-[cytochrome b5] + 2 H2O. In terms of biological role, fatty acid desaturase that introduces a cis double bond at the 5-position in 20-carbon polyunsaturated fatty acids incorporated in a glycerolipid that contain a Delta(8) double bond. Involved in the conversion of di-homo-Delta-linolenic acid to arachidonic acid. Essential in the production of eicosanoids. This Mortierella alpina (Oleaginous fungus) protein is Acyl-lipid (8-3)-desaturase (DES1).